Here is a 100-residue protein sequence, read N- to C-terminus: Tuberoinfundibular peptide of 39 residues (100 aa).

Positions 1-30 are cleaved as a signal peptide; it reads METCQMSRSPRERLLLLLLLLLLVPWGTGP. Positions 31 to 59 are excised as a propeptide; sequence ASGVALPLAGVFSLRAPGRAWAGLGSPLS.

Belongs to the parathyroid hormone family. As to quaternary structure, ligand of high affinity for the PTH2 receptor (PTH2R). As to expression, expressed in testis and, less abundantly, in liver and kidney. Expressed in seminiferous tubuli and several brain regions, including nucleus ruber, caudal paralemniscal nucleus, nucleus centralis pontis, and nucleus subparafascicularis thalami. Expressed in neurons of cerebral cortex and subcortical areas. Expressed in Purkinje cells of cerebellum.

It localises to the secreted. Plays a role as a potent and selective agonist of PTH2R resulting in adenyl cyclase activation and intracellular calcium levels elevation. Induces protein kinase C beta activation, recruitment of beta-arrestin and PTH2R internalization. May inhibit cell proliferation via its action of PTH2R activation. Neuropeptide which may also have a role in spermatogenesis. May activate nociceptors and nociceptive circuits. In Mus musculus (Mouse), this protein is Tuberoinfundibular peptide of 39 residues (Pth2).